We begin with the raw amino-acid sequence, 452 residues long: Mannan endo-1,6-alpha-mannosidase DCW1 (452 aa).

The N-terminal stretch at 1–18 is a signal peptide; sequence MKFSIYLIISLFSSFSHA. N-linked (GlcNAc...) asparagine glycosylation is found at Asn-25, Asn-81, Asn-106, Asn-130, Asn-200, Asn-237, Asn-240, Asn-262, Asn-271, and Asn-286. Gly-431 carries the GPI-anchor amidated glycine lipid modification. The propeptide at 432–452 is removed in mature form; the sequence is AGIITAIIGASLVGSCVWLIL.

Belongs to the glycosyl hydrolase 76 family.

The protein resides in the cell membrane. The enzyme catalyses Random hydrolysis of (1-&gt;6)-alpha-D-mannosidic linkages in unbranched (1-&gt;6)-mannans.. Its function is as follows. Probable mannosidase required for normal synthesis of the cell wall. The sequence is that of Mannan endo-1,6-alpha-mannosidase DCW1 (DCW1) from Candida albicans (strain SC5314 / ATCC MYA-2876) (Yeast).